The sequence spans 597 residues: Gamma-terpinene synthase, chloroplastic (597 aa).

The transit peptide at 1–47 (MATLSMQVSILNKQLKNLNSFGMRASKLPLVARRVDVSTTRLRPICS) directs the protein to the chloroplast. Mn(2+) contacts are provided by Asp350 and Asp354. The DDXXD motif signature appears at 350–354 (DDVYD). Homodimerization regions lie at residues 356-362 (YGTLDEL) and 428-464 (EAKW…YFTL). Residues Asp494 and Glu502 each coordinate Mn(2+).

This sequence belongs to the terpene synthase family. In terms of assembly, homodimer. It depends on Mn(2+) as a cofactor. Mg(2+) is required as a cofactor.

It is found in the plastid. It localises to the chloroplast. The catalysed reaction is (2E)-geranyl diphosphate = gamma-terpinene + diphosphate. It participates in secondary metabolite biosynthesis; terpenoid biosynthesis. Functionally, involved in the biosynthesis of phenolic monoterpenes natural products thymol and carvacrol which have a broad range of biological activities acting as antimicrobial compounds, insecticides, antioxidants and pharmaceutical agents. Monoterpene synthase which catalyzes the conversion of geranyl diphosphate (GPP) to gamma-terpinene and minor amounts of other monoterpenes (e.g. alpha-thujene, alpha-terpinene, myrcene, sabinene, (+)-R-limonene, alpha-pinene and alpha-phellandrene). This Thymus caespititius (Cretan thyme) protein is Gamma-terpinene synthase, chloroplastic.